An 85-amino-acid polypeptide reads, in one-letter code: Small ribosomal subunit protein bS20 (85 aa).

This sequence belongs to the bacterial ribosomal protein bS20 family.

Its function is as follows. Binds directly to 16S ribosomal RNA. The polypeptide is Small ribosomal subunit protein bS20 (Borrelia garinii subsp. bavariensis (strain ATCC BAA-2496 / DSM 23469 / PBi) (Borreliella bavariensis)).